The sequence spans 382 residues: 1-deoxy-D-xylulose 5-phosphate reductoisomerase (382 aa).

NADPH contacts are provided by Thr11, Gly12, Ser13, Ile14, and Asn123. Residue Lys124 coordinates 1-deoxy-D-xylulose 5-phosphate. Residue Glu125 participates in NADPH binding. Residue Asp149 coordinates Mn(2+). The 1-deoxy-D-xylulose 5-phosphate site is built by Ser150, Glu151, Ser173, and His196. Glu151 is a Mn(2+) binding site. NADPH is bound at residue Gly202. 1-deoxy-D-xylulose 5-phosphate is bound by residues Ser209, Asn214, Lys215, and Glu218. Glu218 contacts Mn(2+).

It belongs to the DXR family. Requires Mg(2+) as cofactor. Mn(2+) is required as a cofactor.

The enzyme catalyses 2-C-methyl-D-erythritol 4-phosphate + NADP(+) = 1-deoxy-D-xylulose 5-phosphate + NADPH + H(+). The protein operates within isoprenoid biosynthesis; isopentenyl diphosphate biosynthesis via DXP pathway; isopentenyl diphosphate from 1-deoxy-D-xylulose 5-phosphate: step 1/6. Its function is as follows. Catalyzes the NADPH-dependent rearrangement and reduction of 1-deoxy-D-xylulose-5-phosphate (DXP) to 2-C-methyl-D-erythritol 4-phosphate (MEP). This chain is 1-deoxy-D-xylulose 5-phosphate reductoisomerase, found in Phocaeicola vulgatus (strain ATCC 8482 / DSM 1447 / JCM 5826 / CCUG 4940 / NBRC 14291 / NCTC 11154) (Bacteroides vulgatus).